The chain runs to 238 residues: Ribonuclease PH (238 aa).

Phosphate-binding positions include R86 and G124–R126.

It belongs to the RNase PH family. Homohexameric ring arranged as a trimer of dimers.

The enzyme catalyses tRNA(n+1) + phosphate = tRNA(n) + a ribonucleoside 5'-diphosphate. Phosphorolytic 3'-5' exoribonuclease that plays an important role in tRNA 3'-end maturation. Removes nucleotide residues following the 3'-CCA terminus of tRNAs; can also add nucleotides to the ends of RNA molecules by using nucleoside diphosphates as substrates, but this may not be physiologically important. Probably plays a role in initiation of 16S rRNA degradation (leading to ribosome degradation) during starvation. The protein is Ribonuclease PH of Psychrobacter sp. (strain PRwf-1).